The following is a 120-amino-acid chain: UPF0715 membrane protein YwlA (120 aa).

4 helical membrane-spanning segments follow: residues 3–23 (YNYT…VIYI), 26–46 (FIIA…LIFA), 63–83 (LYLL…FGML), and 95–115 (AFYL…SVLL).

It belongs to the UPF0715 family.

It is found in the cell membrane. The chain is UPF0715 membrane protein YwlA (ywlA) from Bacillus subtilis (strain 168).